A 289-amino-acid chain; its full sequence is CCR4-associated factor 16 (289 aa).

In terms of domain architecture, ABC transporter spans 7 to 249 (IEVRNLTYKF…SEVVNAKVNG (243 aa)). 41-48 (GANGAGKS) contributes to the ATP binding site.

Belongs to the ABC transporter superfamily. As to quaternary structure, interacts with CCR4 and SSN2.

It localises to the cytoplasm. Its subcellular location is the nucleus. The sequence is that of CCR4-associated factor 16 (CAF16) from Saccharomyces cerevisiae (strain ATCC 204508 / S288c) (Baker's yeast).